The sequence spans 569 residues: Sulfite reductase [NADPH] hemoprotein beta-component (569 aa).

[4Fe-4S] cluster is bound by residues cysteine 433, cysteine 439, cysteine 478, and cysteine 482. Cysteine 482 is a siroheme binding site.

The protein belongs to the nitrite and sulfite reductase 4Fe-4S domain family. Alpha(8)-beta(8). The alpha component is a flavoprotein, the beta component is a hemoprotein. Siroheme serves as cofactor. Requires [4Fe-4S] cluster as cofactor.

The catalysed reaction is hydrogen sulfide + 3 NADP(+) + 3 H2O = sulfite + 3 NADPH + 4 H(+). The protein operates within sulfur metabolism; hydrogen sulfide biosynthesis; hydrogen sulfide from sulfite (NADPH route): step 1/1. Component of the sulfite reductase complex that catalyzes the 6-electron reduction of sulfite to sulfide. This is one of several activities required for the biosynthesis of L-cysteine from sulfate. The protein is Sulfite reductase [NADPH] hemoprotein beta-component of Buchnera aphidicola subsp. Acyrthosiphon pisum (strain Tuc7).